Here is a 562-residue protein sequence, read N- to C-terminus: NAD-dependent histone deacetylase SIR2 (562 aa).

The disordered stretch occupies residues 1–67 (MTIPHMKYAV…RETNTTDPLG (67 aa)). Residues 11 to 25 (SKTSENKVSNTVSPT) show a composition bias toward polar residues. Basic and acidic residues predominate over residues 26–36 (QDKDAIRKQPD). The Deacetylase sirtuin-type domain maps to 237–527 (RLSNFFTIDH…AMVAQKCGWT (291 aa)). NAD(+) contacts are provided by residues 262–281 (GAGV…EGFY) and 344–347 (QNID). Histidine 364 functions as the Proton acceptor in the catalytic mechanism. Zn(2+)-binding residues include cysteine 372, cysteine 375, cysteine 396, and cysteine 399. NAD(+)-binding positions include 471-473 (GTS), 496-498 (NRD), and cysteine 513.

This sequence belongs to the sirtuin family. Class I subfamily. Homomultimer. Forms a complex with SIR3 and SIR4. Component of the RENT complex, at least composed of SIR2, CDC14 and NET1. The RENT complex interacts with FOB1. Interacts with ESC8. Interacts with and ZDS2. Interacts with MCM10. Interacts with SLX5. Interacts with NSI1. The cofactor is Zn(2+).

The protein localises to the nucleus. It is found in the nucleolus. It carries out the reaction N(6)-acetyl-L-lysyl-[protein] + NAD(+) + H2O = 2''-O-acetyl-ADP-D-ribose + nicotinamide + L-lysyl-[protein]. Its activity is increased by calorie restriction, which slows the pace of aging and increases maximum lifespan. Activated by resveratrol (3,5,4'-trihydroxy-trans-stilbene), which is found in red wine. Its function is as follows. NAD-dependent deacetylase, which participates in a wide range of cellular events including chromosome silencing, chromosome segregation, DNA recombination and the determination of life span. Involved in transcriptional repression of the silent mating-type loci HML and HMR and telomeric silencing via its association with SIR3 and SIR4. Plays a central role in ribosomal DNA (rDNA) silencing via its association with the RENT complex, preventing hyperrecombination, and repressing transcription from foreign promoters, which contributes to extending life span. Probably represses transcription via the formation of heterochromatin structure, which involves the compaction of chromatin fiber into a more condensed form, although this complex in at least one case can still bind euchromatic levels of positive transcription regulators. Although it displays some NAD-dependent histone deacetylase activity on histone H3K9Ac and H3K14Ac and histone H4K16Ac in vitro, such activity is unclear in vivo and may not be essential. This is NAD-dependent histone deacetylase SIR2 (SIR2) from Saccharomyces cerevisiae (strain ATCC 204508 / S288c) (Baker's yeast).